The chain runs to 94 residues: Co-chaperonin GroES (94 aa).

Belongs to the GroES chaperonin family. Heptamer of 7 subunits arranged in a ring. Interacts with the chaperonin GroEL.

Its subcellular location is the cytoplasm. In terms of biological role, together with the chaperonin GroEL, plays an essential role in assisting protein folding. The GroEL-GroES system forms a nano-cage that allows encapsulation of the non-native substrate proteins and provides a physical environment optimized to promote and accelerate protein folding. GroES binds to the apical surface of the GroEL ring, thereby capping the opening of the GroEL channel. The chain is Co-chaperonin GroES from Tetragenococcus halophilus (Pediococcus halophilus).